A 130-amino-acid polypeptide reads, in one-letter code: Ribosome-binding factor A (130 aa).

A disordered region spans residues 111–130; it reads RDLDDVGPEATSSDEDAEQR.

This sequence belongs to the RbfA family. Monomer. Binds 30S ribosomal subunits, but not 50S ribosomal subunits or 70S ribosomes.

It localises to the cytoplasm. Its function is as follows. One of several proteins that assist in the late maturation steps of the functional core of the 30S ribosomal subunit. Associates with free 30S ribosomal subunits (but not with 30S subunits that are part of 70S ribosomes or polysomes). Required for efficient processing of 16S rRNA. May interact with the 5'-terminal helix region of 16S rRNA. The chain is Ribosome-binding factor A from Xanthomonas axonopodis pv. citri (strain 306).